The sequence spans 177 residues: Nuclear export protein (177 aa).

2 consecutive short sequence motifs (nuclear export signal) follow at residues 91–100 (LWLPMKSLSL) and 117–127 (MKHQILTRLKL).

As to quaternary structure, binds M1 protein. May interact with human nucleoporins and exportin XPO1/CRM1.

Its subcellular location is the virion. It is found in the host nucleus. In terms of biological role, mediates the nuclear export of encapsidated genomic RNAs (ribonucleoproteins, RNPs). Acts as an adapter between viral RNPs complexes and the nuclear export machinery of the cell. Possesses no intrinsic RNA-binding activity, but includes a C-terminal M1-binding domain. This domain is believed to allow recognition of RNPs to which the M1 protein is bound. Because the M1 protein is not available in large quantities until the later stages of infection, such an indirect recognition mechanism probably ensures that genomic RNPs are not exported from the nucleus before sufficient quantities of viral mRNA and progeny genomic RNA have been synthesized. Furthermore, the RNPs enters the cytoplasm only when they have associated with the M1 protein that is necessary to guide them to the plasma membrane. May down-regulate viral RNA synthesis when overproduced. The sequence is that of Nuclear export protein (NS) from Homo sapiens (Human).